Reading from the N-terminus, the 171-residue chain is Small ribosomal subunit protein uS13 (171 aa).

Disordered regions lie at residues 1–22 and 142–171; these read MGKASANNVKSDKEAAKPAAKK and RHEKGKKVRGQRTRSNGRRGLSIGVVRKKE. The segment covering 10–22 has biased composition (basic and acidic residues); sequence KSDKEAAKPAAKK. Positions 142 to 158 are enriched in basic residues; it reads RHEKGKKVRGQRTRSNG.

This sequence belongs to the universal ribosomal protein uS13 family. In terms of assembly, part of the 30S ribosomal subunit. Forms a loose heterodimer with protein S19. Forms two bridges to the 50S subunit in the 70S ribosome.

Its function is as follows. Located at the top of the head of the 30S subunit, it contacts several helices of the 16S rRNA. In the 70S ribosome it contacts the 23S rRNA (bridge B1a) and protein L5 of the 50S subunit (bridge B1b), connecting the 2 subunits; these bridges are implicated in subunit movement. This is Small ribosomal subunit protein uS13 from Thermoplasma volcanium (strain ATCC 51530 / DSM 4299 / JCM 9571 / NBRC 15438 / GSS1).